Consider the following 166-residue polypeptide: Phosphopantetheine adenylyltransferase (166 aa).

S11 serves as a coordination point for substrate. Residues 11–12 (SF) and H19 each bind ATP. 3 residues coordinate substrate: K43, A76, and R90. Residues 91 to 93 (GLR), E101, and 126 to 132 (LQPISSS) contribute to the ATP site.

The protein belongs to the bacterial CoaD family. In terms of assembly, homohexamer. The cofactor is Mg(2+).

It is found in the cytoplasm. It catalyses the reaction (R)-4'-phosphopantetheine + ATP + H(+) = 3'-dephospho-CoA + diphosphate. The protein operates within cofactor biosynthesis; coenzyme A biosynthesis; CoA from (R)-pantothenate: step 4/5. Reversibly transfers an adenylyl group from ATP to 4'-phosphopantetheine, yielding dephospho-CoA (dPCoA) and pyrophosphate. This is Phosphopantetheine adenylyltransferase from Streptococcus equi subsp. zooepidemicus (strain MGCS10565).